A 403-amino-acid chain; its full sequence is 26S proteasome regulatory subunit 8 (403 aa).

186–193 lines the ATP pocket; that stretch reads GPPGTGKT.

Belongs to the AAA ATPase family.

The protein localises to the cytoplasm. The protein resides in the nucleus. Its function is as follows. The 26S proteasome is involved in the ATP-dependent degradation of ubiquitinated proteins. The regulatory (or ATPase) complex confers ATP dependency and substrate specificity to the 26S complex. This chain is 26S proteasome regulatory subunit 8 (psmC5), found in Dictyostelium discoideum (Social amoeba).